A 123-amino-acid chain; its full sequence is PTS system glucitol/sorbitol-specific EIIA component (123 aa).

One can recognise a PTS EIIA type-5 domain in the interval 3 to 116; the sequence is VIYQTTITRI…PDDIAPGSVL (114 aa). H43 acts as the Tele-phosphohistidine intermediate in catalysis. At H43 the chain carries Phosphohistidine; by HPr.

The protein localises to the cytoplasm. In terms of biological role, the phosphoenolpyruvate-dependent sugar phosphotransferase system (sugar PTS), a major carbohydrate active transport system, catalyzes the phosphorylation of incoming sugar substrates concomitantly with their translocation across the cell membrane. The enzyme II complex composed of SrlA, SrlB and SrlE is involved in glucitol/sorbitol transport. It can also use D-mannitol. This Escherichia coli (strain K12) protein is PTS system glucitol/sorbitol-specific EIIA component (srlB).